Reading from the N-terminus, the 238-residue chain is 15,16-dihydrobiliverdin:ferredoxin oxidoreductase (238 aa).

Belongs to the HY2 family.

It catalyses the reaction 15,16-dihydrobiliverdin + oxidized 2[4Fe-4S]-[ferredoxin] = biliverdin IXalpha + reduced 2[4Fe-4S]-[ferredoxin] + 2 H(+). Its function is as follows. Catalyzes the two-electron reduction of biliverdin IX-alpha at the C15 methine bridge. This Prochlorococcus marinus (strain NATL2A) protein is 15,16-dihydrobiliverdin:ferredoxin oxidoreductase.